Here is a 247-residue protein sequence, read N- to C-terminus: tRNA pseudouridine synthase A (247 aa).

Asp52 acts as the Nucleophile in catalysis. Residue Tyr110 coordinates substrate.

This sequence belongs to the tRNA pseudouridine synthase TruA family. As to quaternary structure, homodimer.

It carries out the reaction uridine(38/39/40) in tRNA = pseudouridine(38/39/40) in tRNA. Its function is as follows. Formation of pseudouridine at positions 38, 39 and 40 in the anticodon stem and loop of transfer RNAs. The chain is tRNA pseudouridine synthase A from Hyphomonas neptunium (strain ATCC 15444).